A 365-amino-acid polypeptide reads, in one-letter code: Ribosomal RNA large subunit methyltransferase M (365 aa).

Residues Ser-193, 226 to 229 (CPGG), Asp-245, Asp-265, and Asp-282 each bind S-adenosyl-L-methionine. Lys-311 serves as the catalytic Proton acceptor.

It belongs to the class I-like SAM-binding methyltransferase superfamily. RNA methyltransferase RlmE family. RlmM subfamily. In terms of assembly, monomer.

The protein resides in the cytoplasm. The catalysed reaction is cytidine(2498) in 23S rRNA + S-adenosyl-L-methionine = 2'-O-methylcytidine(2498) in 23S rRNA + S-adenosyl-L-homocysteine + H(+). Functionally, catalyzes the 2'-O-methylation at nucleotide C2498 in 23S rRNA. The polypeptide is Ribosomal RNA large subunit methyltransferase M (Alteromonas mediterranea (strain DSM 17117 / CIP 110805 / LMG 28347 / Deep ecotype)).